The primary structure comprises 244 residues: ATP synthase subunit a, chloroplastic (244 aa).

Helical transmembrane passes span 35–55 (QVLI…VIAV), 92–112 (VPFI…GALL), 131–151 (INTT…AGLS), 196–216 (LVVV…VMFL), and 217–237 (GLFT…AYIG).

This sequence belongs to the ATPase A chain family. As to quaternary structure, F-type ATPases have 2 components, CF(1) - the catalytic core - and CF(0) - the membrane proton channel. CF(1) has five subunits: alpha(3), beta(3), gamma(1), delta(1), epsilon(1). CF(0) has four main subunits: a, b, b' and c.

It localises to the plastid. It is found in the chloroplast thylakoid membrane. In terms of biological role, key component of the proton channel; it plays a direct role in the translocation of protons across the membrane. The polypeptide is ATP synthase subunit a, chloroplastic (Gossypium hirsutum (Upland cotton)).